Consider the following 121-residue polypeptide: Tachykinin-3 (121 aa).

The first 16 residues, Met1–Ala16, serve as a signal peptide directing secretion. Positions Gln17–Glu78 are excised as a propeptide. Met90 bears the Methionine amide mark. The segment at Arg93 to Glu121 is disordered. Positions Ser94 to Glu121 are excised as a propeptide. Positions Gln96–Val108 are enriched in polar residues.

It belongs to the tachykinin family.

Its subcellular location is the secreted. In terms of biological role, tachykinins are active peptides which excite neurons, evoke behavioral responses, are potent vasodilators and secretagogues, and contract (directly or indirectly) many smooth muscles. Is a critical central regulator of gonadal function. The protein is Tachykinin-3 (TAC3) of Homo sapiens (Human).